The chain runs to 336 residues: Ornithine carbamoyltransferase (336 aa).

Residues 56–59, Q83, R107, and 134–137 contribute to the carbamoyl phosphate site; these read STRT and HPTQ. Residues N168, D232, and 236–237 each bind L-ornithine; that span reads SM. Carbamoyl phosphate contacts are provided by residues 274–275 and R320; that span reads CL.

It belongs to the aspartate/ornithine carbamoyltransferase superfamily. OTCase family.

Its subcellular location is the cytoplasm. It carries out the reaction carbamoyl phosphate + L-ornithine = L-citrulline + phosphate + H(+). The protein operates within amino-acid biosynthesis; L-arginine biosynthesis; L-arginine from L-ornithine and carbamoyl phosphate: step 1/3. In terms of biological role, reversibly catalyzes the transfer of the carbamoyl group from carbamoyl phosphate (CP) to the N(epsilon) atom of ornithine (ORN) to produce L-citrulline. The chain is Ornithine carbamoyltransferase from Erwinia tasmaniensis (strain DSM 17950 / CFBP 7177 / CIP 109463 / NCPPB 4357 / Et1/99).